The chain runs to 183 residues: Abscisic acid receptor PYL10 (183 aa).

An START-like region spans residues 20–172 (HELVESQCSS…NLNSLADVTE (153 aa)). The cysteines at positions 27 and 153 are disulfide-linked. Residues Lys-56, 85-90 (ATKSTE), 112-118 (RLKNYSS), and Glu-137 contribute to the abscisate site. The Gate loop motif lies at 81–85 (SGLPA). The short motif at 111 to 113 (HRL) is the Latch loop element.

It belongs to the PYR/PYL/RCAR abscisic acid intracellular receptor family. As to quaternary structure, monomer. Forms heterodimer with PYL13, thus antagonizing PP2Cs-binding and ABA-independent inhibition of PP2Cs. Homodimer. Binds ABA on one subunit only. Binds to CARs protein in an ABA-independent manner, both at the plasma membrane and in the nucleus. Interacts with ABI1 and HAB1, and possibly with other PP2Cs, in an ABA-independent manner.

Its subcellular location is the cytoplasm. The protein localises to the nucleus. It localises to the cell membrane. Functionally, receptor for abscisic acid (ABA) required for ABA-mediated responses such as stomatal closure and germination inhibition. Inhibits the activity of group-A protein phosphatases type 2C (PP2Cs) in an ABA-independent manner but more efficiently when activated by ABA. Can be activated by both (-)-ABA and (+)-ABA. In Arabidopsis thaliana (Mouse-ear cress), this protein is Abscisic acid receptor PYL10 (PYL10).